A 380-amino-acid chain; its full sequence is MSSPDGGYASDDQNQGKCSVPIMMTGLGQCQWAEPMTSLGEGKLKSDAGSANSRSKAEARIRRPMNAFMVWAKDERKRLAQQNPDLHNAELSKMLGKSWKSLTLAEKRPFVEEAERLRVQHMQDHPNYKYRPRRRKQVKRMKRAENGFMHMAEAQESAVLGADGRMCLENFSLGYHEQTYPHGQVPQSSHYREPQAVAPHYDGYSLPTPESSPLDLAEADPVFFTSPAQDECQMMPYSYNGSYPHQQNSMLVRQMPQTEQMGQVSPVQGMMACQSSPHMYYGQMYLPGSARHHQLHQAGQPSPPPEAQQMGRADHIQPADMLAEVDRTEFEQYLSYVAKSDLGMHYHAQESVVPTADNGPISSVLSDASTAVYYCNYPSA.

2 disordered regions span residues 1 to 20 (MSSPDGGYASDDQNQGKCSV) and 40 to 59 (GEGKLKSDAGSANSRSKAEA). The HMG box DNA-binding region spans 61–129 (IRRPMNAFMV…QHMQDHPNYK (69 aa)). The Sox C-terminal domain occupies 264–379 (VSPVQGMMAC…TAVYYCNYPS (116 aa)). The segment at 292–312 (HHQLHQAGQPSPPPEAQQMGR) is disordered. A 9aaTAD motif is present at residues 328 to 336 (TEFEQYLSY). The tract at residues 329–334 (EFEQYL) is required for transcriptional activity and interaction with ctnnb1.

As to quaternary structure, interacts (via C-terminus) with ctnnb1/beta-catenin (via Armadillo repeats); this interaction is required for inhibition of wnt-signaling. In terms of tissue distribution, in early gastrulae, expressed in the vegetal but not animal hemisphere. The vegetal region is fated to become endoderm, and endodermal expression continues throughout gastrulation and neurulation. At tailbud stages, expression is down-regulated and becomes restricted to the most posterior endoderm and the future liver/gall bladder region. By 3-7 days, endodermal expression is restricted to the gall bladder bud. Also expressed in the embryonic gut, with strong expression in the posterior gut during tailbud stages, but by stage 40, expression rises again in the anterior gut. Expressed at a low level in the adult kidney and spleen.

The protein resides in the nucleus. Functionally, transcriptional activator. Binds to the DNA sequence 5'-AACAAT-3'. All of the sox17 proteins are required for embryonic endoderm development and gastrulation movements, and show some redundancy in function. In addition, the sox17 proteins have distinct but overlapping roles in later gut development. Acts downstream of vegt-signaling in endoderm differentiation to induce a range of endodermal genes both directly (including endodermin and dhh/chh) and indirectly. Also represses wnt-responsive genes to inhibit wnt/beta-catenin signaling. In Xenopus laevis (African clawed frog), this protein is Transcription factor Sox-17-alpha-A (sox17a-a).